A 302-amino-acid polypeptide reads, in one-letter code: Glutaminase (302 aa).

Substrate contacts are provided by S61, N111, E155, N162, Y186, Y238, and V256.

This sequence belongs to the glutaminase family. In terms of assembly, homotetramer.

The catalysed reaction is L-glutamine + H2O = L-glutamate + NH4(+). This Pseudomonas fluorescens (strain Pf0-1) protein is Glutaminase.